The following is a 206-amino-acid chain: Guanylate kinase (206 aa).

One can recognise a Guanylate kinase-like domain in the interval 5–184; that stretch reads GMLIVLSGPS…AAERIKAIIR (180 aa). 12 to 19 serves as a coordination point for ATP; sequence GPSGVGKG.

The protein belongs to the guanylate kinase family.

It localises to the cytoplasm. The catalysed reaction is GMP + ATP = GDP + ADP. Essential for recycling GMP and indirectly, cGMP. In Lactiplantibacillus plantarum (strain ATCC BAA-793 / NCIMB 8826 / WCFS1) (Lactobacillus plantarum), this protein is Guanylate kinase.